The following is a 219-amino-acid chain: Asperlin biosynthesis cluster protein I (219 aa).

Residues 97–124 are disordered; that stretch reads TGSSDNSPTATGIGAAGLTGDRPSSSGA. A compositionally biased stretch (low complexity) spans 105 to 116; that stretch reads TATGIGAAGLTG.

It functions in the pathway polyketide biosynthesis. Its function is as follows. Part of the gene cluster that mediates the biosynthesis of asperlin, a polyketide showing anti-inflammatory, antitumor and antibiotic activities. The first step of the asperlin biosynthesis is the production of the intermediate 2,4,6-octatrienoic acid by the highly redusing polyketide synthase alnA with cleavage of the PKS product by the esterase alnB. 2,4,6-octatrienoic acid is further converted to asperlin via several steps involving the remaining enzymes from the cluster. The sequence is that of Asperlin biosynthesis cluster protein I from Emericella nidulans (strain FGSC A4 / ATCC 38163 / CBS 112.46 / NRRL 194 / M139) (Aspergillus nidulans).